The following is a 506-amino-acid chain: Maturase K (506 aa).

It belongs to the intron maturase 2 family. MatK subfamily.

The protein localises to the plastid. It is found in the chloroplast. Usually encoded in the trnK tRNA gene intron. Probably assists in splicing its own and other chloroplast group II introns. This is Maturase K from Wisteria frutescens (American wisteria).